A 496-amino-acid polypeptide reads, in one-letter code: MTGGALLVAGTTSDAGKSMLVGGLCRLLVRKGLSVAPFKAQNMSNNSAVTVEGGEIGRAQAMQARAAGLAPSVRFNPILLKPGGDRTSQLVVRGQVTGSVAAADYINHRDHLAAVVADELSSLREDFDAVICEGAGSPAEINLRATDLANMGLARAAALPVIVVGDIDRGGLLAHLHGTVAVLEPADQALVSGFVVNKFRGDPSLLAPGLRQLAELTGRPTYGVIPFHDEIWLDTEDSVSVRPGGLVGAPEPPRGEQTLTVAAIRLPRISNSTDIEALACEPGVVVRWVTDAADLTGADLVVIPGSKATVTDLRWLRERGLAAGIAAHAAAGRAVLGVCGGFQMLCSRIDDPVESREGRVDGLGLLDADIEFAAQKTLRHWETPLHGYEIHHGQVARSAETDWLGIGLRRGAVYGTHWHGLLDNDALRRDWLTEVAAAAGRDGFVVADDVDVSARRDAQLDLMADLIENHLDVGAILDLLEHGAPHRPTMSTALHV.

The GATase cobBQ-type domain maps to 258–427 (TLTVAAIRLP…WHGLLDNDAL (170 aa)). Cys339 serves as the catalytic Nucleophile. His419 is an active-site residue.

Belongs to the CobB/CobQ family. CobQ subfamily.

It functions in the pathway cofactor biosynthesis; adenosylcobalamin biosynthesis. Functionally, catalyzes amidations at positions B, D, E, and G on adenosylcobyrinic A,C-diamide. NH(2) groups are provided by glutamine, and one molecule of ATP is hydrogenolyzed for each amidation. This is Cobyric acid synthase from Mycolicibacterium smegmatis (strain ATCC 700084 / mc(2)155) (Mycobacterium smegmatis).